The following is a 51-amino-acid chain: UPF0320 protein YOL166W-A (51 aa).

The protein belongs to the UPF0320 family.

The protein is UPF0320 protein YOL166W-A of Saccharomyces cerevisiae (strain ATCC 204508 / S288c) (Baker's yeast).